The following is a 554-amino-acid chain: Chaperonin GroEL (554 aa).

ATP is bound by residues 30-33, lysine 51, 87-91, glycine 416, and aspartate 503; these read TLGP and DGTTT.

The protein belongs to the chaperonin (HSP60) family. As to quaternary structure, forms a cylinder of 14 subunits composed of two heptameric rings stacked back-to-back. Interacts with the co-chaperonin GroES.

It localises to the cytoplasm. It carries out the reaction ATP + H2O + a folded polypeptide = ADP + phosphate + an unfolded polypeptide.. Functionally, together with its co-chaperonin GroES, plays an essential role in assisting protein folding. The GroEL-GroES system forms a nano-cage that allows encapsulation of the non-native substrate proteins and provides a physical environment optimized to promote and accelerate protein folding. This chain is Chaperonin GroEL, found in Holospora obtusa.